Reading from the N-terminus, the 306-residue chain is Homoserine O-acetyltransferase (306 aa).

The active-site Acyl-thioester intermediate is Cys-142. Residues Lys-163 and Ser-192 each coordinate substrate. His-235 (proton acceptor) is an active-site residue. Residue Glu-237 is part of the active site. Arg-249 is a substrate binding site.

This sequence belongs to the MetA family.

It localises to the cytoplasm. It catalyses the reaction L-homoserine + acetyl-CoA = O-acetyl-L-homoserine + CoA. Its pathway is amino-acid biosynthesis; L-methionine biosynthesis via de novo pathway; O-acetyl-L-homoserine from L-homoserine: step 1/1. Transfers an acetyl group from acetyl-CoA to L-homoserine, forming acetyl-L-homoserine. The polypeptide is Homoserine O-acetyltransferase (Clostridium botulinum (strain Eklund 17B / Type B)).